The primary structure comprises 694 residues: Voltage-gated chloride channel TMC4 (694 aa).

Residues 1-21 form a disordered region; sequence MEAWGQSPACSSSRKARTGPS. At 1-150 the chain is on the extracellular side; sequence MEAWGQSPAC…GTESYFSLLR (150 aa). A helical membrane pass occupies residues 151–171; the sequence is FLLFLNLVASVIEICMKLIPT. The Cytoplasmic segment spans residues 172–231; it reads WLEGAPPGPPGPNISSPCGSYIPHTHGLVAFPTQLFNLLSGEGYLEWSPLFYGFYPPRSN. The chain crosses the membrane as a helical span at residues 232 to 252; the sequence is LAITYLCSVFAISVIYLLCIL. Residues 253–330 are Extracellular-facing; the sequence is RRSVSGLKET…SQRAKVWSMR (78 aa). A helical transmembrane segment spans residues 331-351; that stretch reads ALLNVLVLALLGAAFYGIYWA. The Cytoplasmic segment spans residues 352–376; sequence TEYTLTLQETPLVRQTPLFKLLVDY. A helical membrane pass occupies residues 377-397; that stretch reads LPSIFISLFNFVLPPVFKFIA. At 398-407 the chain is on the extracellular side; that stretch reads SLEGYTQSRQ. A helical membrane pass occupies residues 408–428; sequence IVLILLRTVFLRLASLVFLLV. At 429–465 the chain is on the cytoplasmic side; the sequence is SLWSQITCGGNMEAEGCKACGYNYKEIPCWETRLGQE. The helical transmembrane segment at 466-486 threads the bilayer; that stretch reads MYKLVLFDLLMGLLVTLLVQF. The Extracellular segment spans residues 487–513; the sequence is PRKILCGLCPGALGRLSGTLEFQVPDE. A helical membrane pass occupies residues 514-534; it reads VLGLIYAQTVVWVGSFFCPLL. A topological domain (cytoplasmic) is located at residue P535. A helical transmembrane segment spans residues 536-556; sequence LINTAKFLILFCLKKITLFSI. Over 557 to 574 the chain is Extracellular; sequence YSPASRTFRASTANFFFP. A helical transmembrane segment spans residues 575-595; sequence LVLLVGLAISAVPVLYSIFLI. The Cytoplasmic portion of the chain corresponds to 596–635; sequence PPSKLCGPFRGKLSIWAQIPEAIESLPQTAQNFLYFLGTQ. Residues 636–656 traverse the membrane as a helical segment; the sequence is AFTVPLLILSSILMMYTVALA. Topologically, residues 657–694 are extracellular; sequence NCYGRLISELKRQIETEVQNKVFLAQRAVALSSRNGTS. N-linked (GlcNAc...) asparagine glycosylation is present at N691.

It belongs to the TMC family. Expressed in taste bud cells of the posterior tongue. Ubiquitously expressed.

It localises to the membrane. It catalyses the reaction chloride(in) = chloride(out). In terms of biological role, voltage-gated chloride channel involved in high-concentration salt taste sensation. Depolarization induced by high NaCl concentration may trigger the activation of TMC4-mediated chloride influx into taste bud cells, helping the return to resting potential. Also allows permeation of organic anions including gluconate, but their current amplitudes at positive potentials are less than that of chloride. Involved in pH and temperature-dependent modulation of salty taste. This Mus musculus (Mouse) protein is Voltage-gated chloride channel TMC4.